A 266-amino-acid polypeptide reads, in one-letter code: Chymotrypsin-like elastase family member 1 (266 aa).

The first 16 residues, 1-16 (MLRLLVFTSLVLYGHS), serve as a signal peptide directing secretion. The propeptide at 17–26 (TQDFPETNAR) is activation peptide. The Peptidase S1 domain occupies 27–264 (VVGGTAVSKN…YISWINNAIA (238 aa)). A disulfide bond links cysteine 56 and cysteine 72. The active-site Charge relay system is histidine 71. 4 residues coordinate Ca(2+): aspartate 85, asparagine 87, glutamine 90, and glutamate 95. A glycan (N-linked (GlcNAc...) asparagine) is linked at asparagine 87. Aspartate 119 functions as the Charge relay system in the catalytic mechanism. Cystine bridges form between cysteine 153-cysteine 220, cysteine 184-cysteine 200, and cysteine 210-cysteine 240. Serine 214 functions as the Charge relay system in the catalytic mechanism. The N-linked (GlcNAc...) asparagine glycan is linked to asparagine 241.

It belongs to the peptidase S1 family. Elastase subfamily. It depends on Ca(2+) as a cofactor. Pancreas.

Its subcellular location is the secreted. It catalyses the reaction Hydrolysis of proteins, including elastin. Preferential cleavage: Ala-|-Xaa.. Serine proteases that hydrolyze many proteins in addition to elastin. The polypeptide is Chymotrypsin-like elastase family member 1 (CELA1) (Bos taurus (Bovine)).